The chain runs to 377 residues: Sterol 24-C-methyltransferase erg6 (377 aa).

The protein belongs to the class I-like SAM-binding methyltransferase superfamily. Erg6/SMT family.

The protein resides in the microsome. Its subcellular location is the mitochondrion. It carries out the reaction lanosterol + S-adenosyl-L-methionine = eburicol + S-adenosyl-L-homocysteine + H(+). Its pathway is steroid metabolism; ergosterol biosynthesis. With respect to regulation, specific and total activity is decreased in presence of alpha-bisabolol. Its function is as follows. Sterol 24-C-methyltransferase; part of the third module of ergosterol biosynthesis pathway that includes the late steps of the pathway. Methylates lanosterol at C-24 to produce eburicol. The third module or late pathway involves the ergosterol synthesis itself through consecutive reactions that mainly occur in the endoplasmic reticulum (ER) membrane. Firstly, the squalene synthase erg9 catalyzes the condensation of 2 farnesyl pyrophosphate moieties to form squalene, which is the precursor of all steroids. Squalene synthase is crucial for balancing the incorporation of farnesyl diphosphate (FPP) into sterol and nonsterol isoprene synthesis. Secondly, squalene is converted into lanosterol by the consecutive action of the squalene epoxidase erg1 and the lanosterol synthase erg7. Then, the delta(24)-sterol C-methyltransferase erg6 methylates lanosterol at C-24 to produce eburicol. Eburicol is the substrate of the sterol 14-alpha demethylase encoded by cyp51A and cyp51B, to yield 4,4,24-trimethyl ergosta-8,14,24(28)-trienol. The C-14 reductase erg24 then reduces the C14=C15 double bond which leads to 4,4-dimethylfecosterol. A sequence of further demethylations at C-4, involving the C-4 demethylation complex containing the C-4 methylsterol oxidases erg25A or erg25B, the sterol-4-alpha-carboxylate 3-dehydrogenase erg26 and the 3-keto-steroid reductase erg27, leads to the production of fecosterol via 4-methylfecosterol. The C-8 sterol isomerase erg2 then catalyzes the reaction which results in unsaturation at C-7 in the B ring of sterols and thus converts fecosterol to episterol. The sterol-C5-desaturase erg3B then catalyzes the introduction of a C-5 double bond in the B ring to produce 5-dehydroepisterol. The 2 other sterol-C5-desaturases, erg3A and erg3C, seem to be less important in ergosterol biosynthesis. The C-22 sterol desaturase erg5 further converts 5-dehydroepisterol into ergosta-5,7,22,24(28)-tetraen-3beta-ol by forming the C-22(23) double bond in the sterol side chain. Finally, ergosta-5,7,22,24(28)-tetraen-3beta-ol is substrate of the C-24(28) sterol reductases erg4A and erg4B to produce ergosterol. Possible alternative sterol biosynthetic pathways might exist from fecosterol to ergosterol, depending on the activities of the erg3 isoforms. This Aspergillus fumigatus (strain ATCC MYA-4609 / CBS 101355 / FGSC A1100 / Af293) (Neosartorya fumigata) protein is Sterol 24-C-methyltransferase erg6.